Here is a 137-residue protein sequence, read N- to C-terminus: Glutamate mutase sigma subunit (137 aa).

The 135-residue stretch at 3 to 137 folds into the B12-binding domain; sequence EVNLVLGVIG…KALKEDLGLM (135 aa). Adenosylcob(III)alamin is bound by residues 13 to 17, His-16, 61 to 63, and 93 to 97; these read ADVHA, SSL, and NLVVG.

Belongs to the methylaspartate mutase GlmS subunit family. Heterotetramer composed of 2 epsilon subunits (GlmE) and 2 sigma subunits (GlmS). GlmE exists as a homodimer and GlmS as a monomer. It depends on adenosylcob(III)alamin as a cofactor.

The catalysed reaction is (2S,3S)-3-methyl-L-aspartate = L-glutamate. Its pathway is amino-acid degradation; L-glutamate degradation via mesaconate pathway; acetate and pyruvate from L-glutamate: step 1/4. Catalyzes the carbon skeleton rearrangement of L-glutamate to L-threo-3-methylaspartate ((2S,3S)-3-methylaspartate). This is Glutamate mutase sigma subunit from Carboxydothermus hydrogenoformans (strain ATCC BAA-161 / DSM 6008 / Z-2901).